The sequence spans 272 residues: HMP-PP phosphatase (272 aa).

Residue D8 is the Nucleophile of the active site. Residues D8, D10, and D212 each coordinate Mg(2+).

The protein belongs to the HAD-like hydrolase superfamily. Cof family. The cofactor is Mg(2+).

It catalyses the reaction 4-amino-2-methyl-5-(diphosphooxymethyl)pyrimidine + H2O = 4-amino-2-methyl-5-(phosphooxymethyl)pyrimidine + phosphate + H(+). Functionally, catalyzes the hydrolysis of 4-amino-2-methyl-5-hydroxymethylpyrimidine pyrophosphate (HMP-PP) to 4-amino-2-methyl-5-hydroxymethylpyrimidine phosphate (HMP-P). The chain is HMP-PP phosphatase from Escherichia coli O81 (strain ED1a).